The sequence spans 197 residues: Recombination protein RecR (197 aa).

Residues 54–69 (CQQCNNYTEQTLCTLC) form a C4-type zinc finger. In terms of domain architecture, Toprim spans 77–172 (TLLCVVESPA…NISQLAHGIP (96 aa)).

It belongs to the RecR family.

Functionally, may play a role in DNA repair. It seems to be involved in an RecBC-independent recombinational process of DNA repair. It may act with RecF and RecO. The polypeptide is Recombination protein RecR (Legionella pneumophila (strain Paris)).